A 502-amino-acid chain; its full sequence is Actin-binding protein WASF3 (502 aa).

Residues 57–93 (NEANNFYIRANSLQDRIDRLAVKVTQLDSTVEEVSLQ) are a coiled coil. The residue at position 151 (tyrosine 151) is a Phosphotyrosine; by ABL1. A coiled-coil region spans residues 162-206 (KEKMLQDTEDKRKEKRRQKEQKRIDGTTREVKKVRKARNRRQEWN). 2 disordered regions span residues 169-210 (TEDK…MMAY) and 223-443 (SVYH…ARSD). The span at 182–192 (QKRIDGTTREV) shows a compositional bias: basic and acidic residues. A compositionally biased stretch (polar residues) spans 223–237 (SVYHGASSEGSLSPD). Position 248 is a phosphotyrosine; by ABL1 (tyrosine 248). Residues 302–312 (QQPPPPPPPQA) are compositionally biased toward pro residues. Position 337 is a phosphotyrosine; by ABL1 (tyrosine 337). Pro residues-rich tracts occupy residues 341–352 (SGPPPPPPPPVI) and 394–410 (APPP…PPGP). A compositionally biased stretch (low complexity) spans 411–423 (GSSLSSSPMHGPP). The region spanning 440 to 457 (ARSDLLAAIRMGIQLKKV) is the WH2 domain. Tyrosine 486 is modified (phosphotyrosine; by ABL1).

This sequence belongs to the SCAR/WAVE family. In terms of assembly, binds actin and the Arp2/3 complex. In terms of processing, phosphorylation by ABL1 promotes lamellipodia formation and cell migration. Expressed in ovary and brain.

The protein resides in the cytoplasm. The protein localises to the cytoskeleton. Downstream effector molecules involved in the transmission of signals from tyrosine kinase receptors and small GTPases to the actin cytoskeleton. Plays a role in the regulation of cell morphology and cytoskeletal organization. Required in the control of cell shape. The sequence is that of Actin-binding protein WASF3 (WASF3) from Homo sapiens (Human).